The chain runs to 355 residues: MHHRWLLLVACFWVLFMLMVASKLITLTMKDPEGYGNKQGPLTVLPETEKIAVAETTKLQIESQPTTNSLKDESYTVLLHKERTELLRSVCSNGSLRNLSHTAISKFVLDRIFVSDKHRILFCQTPKVGNTQWKKVLIVLNGAFSSIEEIPENVVHDHEKNGLPRLSSFSAQDVHERLNSYFKFFIVRDPFERLISAFKDKFVHNPRFEPWYKHDIAPAIIRKYRKDRRESRGGLQFQDFVRYLGDPNHRFLDLQFGDHIIHWVTYVELCAPCEIDYNVIGHHETLEDDAPYILREAGIEHLVSYPTIPPGITKYNKSKVENYFSKVSKRDIRRLYTRFERDFKLFGYKEPTFLF.

Residues 1–6 are Cytoplasmic-facing; it reads MHHRWL. A helical; Signal-anchor for type II membrane protein membrane pass occupies residues 7–27; that stretch reads LLVACFWVLFMLMVASKLITL. At 28–355 the chain is on the lumenal side; the sequence is TMKDPEGYGN…FGYKEPTFLF (328 aa). 2 N-linked (GlcNAc...) asparagine glycosylation sites follow: Asn93 and Asn98. Residues 126 to 132 and 188 to 196 contribute to the 3'-phosphoadenylyl sulfate site; these read PKVGNTQ and RDPFERLIS. An N-linked (GlcNAc...) asparagine glycan is attached at Asn316.

It belongs to the sulfotransferase 2 family.

Its subcellular location is the golgi apparatus membrane. Catalyzes the transfer of sulfate to position 3 of terminal glucuronic acid of both protein- and lipid-linked oligosaccharides. Participates in biosynthesis of HNK-1 carbohydrate structure, a sulfated glucuronyl-lactosaminyl residue carried by many neural recognition molecules. In Xenopus laevis (African clawed frog), this protein is Carbohydrate sulfotransferase 10 (chst10).